We begin with the raw amino-acid sequence, 134 residues long: MTGGGKSGGKASGSKNAQSRSSKAGLAFPVGRVHRLLRKGNYAQRVGAGAPVYLAAVLEYLAAEILELAGNAARDNKKTRIIPRHLQLAIRNDEELNKLLGHVTIAQGGVLPNIHQNLLPKKTGKTGKTSSMEL.

The span at 1–11 (MTGGGKSGGKA) shows a compositional bias: gly residues. The disordered stretch occupies residues 1-24 (MTGGGKSGGKASGSKNAQSRSSKA). Lys6 and Lys10 each carry N6-acetyllysine. Gln107 is modified (N5-methylglutamine).

The protein belongs to the histone H2A family. In terms of assembly, the nucleosome is a histone octamer containing two molecules each of H2A, H2B, H3 and H4 assembled in one H3-H4 heterotetramer and two H2A-H2B heterodimers. The octamer wraps approximately 147 bp of DNA. In terms of processing, acetylated by ESA1 to form H2AK4ac and H2AK7ac.

The protein localises to the nucleus. It localises to the chromosome. Functionally, core component of nucleosome. Nucleosomes wrap and compact DNA into chromatin, limiting DNA accessibility to the cellular machineries which require DNA as a template. Histones thereby play a central role in transcription regulation, DNA repair, DNA replication and chromosomal stability. DNA accessibility is regulated via a complex set of post-translational modifications of histones, also called histone code, and nucleosome remodeling. The protein is Histone H2A (HTA1) of Gibberella zeae (strain ATCC MYA-4620 / CBS 123657 / FGSC 9075 / NRRL 31084 / PH-1) (Wheat head blight fungus).